The following is a 360-amino-acid chain: Phospho-N-acetylmuramoyl-pentapeptide-transferase (360 aa).

The next 10 membrane-spanning stretches (helical) occupy residues 27–47, 72–92, 94–114, 132–152, 168–188, 199–219, 236–256, 263–283, 288–308, and 338–358; these read IVSL…LIAW, PTMG…MWAY, SNPY…VGFI, WKYF…YSIG, IMPQ…VGTS, GLAI…AWAT, AGEL…FLWF, VFMG…IAVL, FLLV…ILQV, and VIVR…ATLK.

The protein belongs to the glycosyltransferase 4 family. MraY subfamily. The cofactor is Mg(2+).

It localises to the cell inner membrane. It carries out the reaction UDP-N-acetyl-alpha-D-muramoyl-L-alanyl-gamma-D-glutamyl-meso-2,6-diaminopimeloyl-D-alanyl-D-alanine + di-trans,octa-cis-undecaprenyl phosphate = di-trans,octa-cis-undecaprenyl diphospho-N-acetyl-alpha-D-muramoyl-L-alanyl-D-glutamyl-meso-2,6-diaminopimeloyl-D-alanyl-D-alanine + UMP. The protein operates within cell wall biogenesis; peptidoglycan biosynthesis. Its function is as follows. Catalyzes the initial step of the lipid cycle reactions in the biosynthesis of the cell wall peptidoglycan: transfers peptidoglycan precursor phospho-MurNAc-pentapeptide from UDP-MurNAc-pentapeptide onto the lipid carrier undecaprenyl phosphate, yielding undecaprenyl-pyrophosphoryl-MurNAc-pentapeptide, known as lipid I. In Yersinia pestis bv. Antiqua (strain Angola), this protein is Phospho-N-acetylmuramoyl-pentapeptide-transferase.